We begin with the raw amino-acid sequence, 243 residues long: Small ribosomal subunit protein uS3 (243 aa).

The KH type-2 domain maps to 39 to 107 (IRAYLIKELK…ETHLNIVEVR (69 aa)). The disordered stretch occupies residues 214–243 (ASERRGLEGDAQGPASRERGDRPDRRRENA). A compositionally biased stretch (basic and acidic residues) spans 229–243 (SRERGDRPDRRRENA).

It belongs to the universal ribosomal protein uS3 family. As to quaternary structure, part of the 30S ribosomal subunit. Forms a tight complex with proteins S10 and S14.

Functionally, binds the lower part of the 30S subunit head. Binds mRNA in the 70S ribosome, positioning it for translation. In Agrobacterium fabrum (strain C58 / ATCC 33970) (Agrobacterium tumefaciens (strain C58)), this protein is Small ribosomal subunit protein uS3.